The sequence spans 182 residues: ATP-dependent protease subunit HslV (182 aa).

Thr12 is an active-site residue. Residues Ala167, Cys170, and Thr173 each coordinate Na(+).

This sequence belongs to the peptidase T1B family. HslV subfamily. A double ring-shaped homohexamer of HslV is capped on each side by a ring-shaped HslU homohexamer. The assembly of the HslU/HslV complex is dependent on binding of ATP.

Its subcellular location is the cytoplasm. It catalyses the reaction ATP-dependent cleavage of peptide bonds with broad specificity.. Allosterically activated by HslU binding. Protease subunit of a proteasome-like degradation complex believed to be a general protein degrading machinery. In Paramagnetospirillum magneticum (strain ATCC 700264 / AMB-1) (Magnetospirillum magneticum), this protein is ATP-dependent protease subunit HslV.